Consider the following 587-residue polypeptide: Phosphomethylpyrimidine synthase (587 aa).

Substrate-binding positions include asparagine 218, methionine 247, tyrosine 276, histidine 312, 332–334 (SRG), 373–376 (DGLR), and glutamate 412. Histidine 416 contributes to the Zn(2+) binding site. Residue tyrosine 439 participates in substrate binding. Histidine 480 provides a ligand contact to Zn(2+). Cysteine 560, cysteine 563, and cysteine 568 together coordinate [4Fe-4S] cluster.

The protein belongs to the ThiC family. [4Fe-4S] cluster serves as cofactor.

It catalyses the reaction 5-amino-1-(5-phospho-beta-D-ribosyl)imidazole + S-adenosyl-L-methionine = 4-amino-2-methyl-5-(phosphooxymethyl)pyrimidine + CO + 5'-deoxyadenosine + formate + L-methionine + 3 H(+). It functions in the pathway cofactor biosynthesis; thiamine diphosphate biosynthesis. Functionally, catalyzes the synthesis of the hydroxymethylpyrimidine phosphate (HMP-P) moiety of thiamine from aminoimidazole ribotide (AIR) in a radical S-adenosyl-L-methionine (SAM)-dependent reaction. This is Phosphomethylpyrimidine synthase from Porphyromonas gingivalis (strain ATCC BAA-308 / W83).